A 574-amino-acid polypeptide reads, in one-letter code: MRTAYCGQLNLSHVGLEVTLCGWINKYRNFGGLIFIDLRDREGCIQVCFDVYQNKEVCISAAKLKQEFCIQLIGMVRARPKNQINSNISTGAVEVVAKKFSILNISDPLPLDISKNNIEENRLKYRYLDLRRSIMFDRIKTRSRIMSIVHRFMELEGFLNIETPMLTKVTPEGSRDYIVPSRLHAGKNYALPQSPQIFKQLLMVSGFDRYYQITKCFRDEDLRADRQPEFTQIDIETSFMTTQKIRELMEIFIRIIWREILNVELGVFSQFTYSEVMQRFGSDAPDLRNPIEMFDVSYLFNSTQNRLSFIRANNIGVQAIAMKVPNGRQLTQKQIDEYIYYSKQCGLKELLWVKVQFSDNDITKKEIQGSVTNFIDNLTLDIILNKTNIKSNDILFVGFNDNKNQFITKMLSALRLKLGNDLCLIKKDSWAPLWIIDFPMFKKNCHGEYTSMHHMFTSPKNCDVQMLKKDPLLVISEAYDMVINGCEIGSGSARIHSFDMQQAVFNILGITQNDQKKKFGYFMDALKYGAPPHAGLAFGLDRIAMLLTGSKNIREVIAFPKTTASVDIMANAPD.

L-aspartate is bound at residue Glu-172. Residues 196 to 199 (QIFK) form an aspartate region. Arg-218 provides a ligand contact to L-aspartate. ATP contacts are provided by residues 218-220 (RDE) and Gln-227. His-453 contacts L-aspartate. Residue Glu-487 coordinates ATP. Arg-494 serves as a coordination point for L-aspartate. 539–542 (GLDR) serves as a coordination point for ATP.

The protein belongs to the class-II aminoacyl-tRNA synthetase family. Type 1 subfamily. As to quaternary structure, homodimer.

It is found in the cytoplasm. The catalysed reaction is tRNA(Asp) + L-aspartate + ATP = L-aspartyl-tRNA(Asp) + AMP + diphosphate. Functionally, catalyzes the attachment of L-aspartate to tRNA(Asp) in a two-step reaction: L-aspartate is first activated by ATP to form Asp-AMP and then transferred to the acceptor end of tRNA(Asp). The protein is Aspartate--tRNA ligase of Blochmanniella pennsylvanica (strain BPEN).